A 350-amino-acid polypeptide reads, in one-letter code: Ferredoxin--NADP reductase (350 aa).

FAD contacts are provided by Thr-14, Asp-33, Gln-41, Tyr-46, Ala-86, Phe-121, Asp-286, and Thr-327.

It belongs to the ferredoxin--NADP reductase type 2 family. Homodimer. FAD serves as cofactor.

It catalyses the reaction 2 reduced [2Fe-2S]-[ferredoxin] + NADP(+) + H(+) = 2 oxidized [2Fe-2S]-[ferredoxin] + NADPH. The polypeptide is Ferredoxin--NADP reductase (Flavobacterium johnsoniae (strain ATCC 17061 / DSM 2064 / JCM 8514 / BCRC 14874 / CCUG 350202 / NBRC 14942 / NCIMB 11054 / UW101) (Cytophaga johnsonae)).